We begin with the raw amino-acid sequence, 725 residues long: Consortin (725 aa).

5 disordered regions span residues 1-72 (MDDS…LNNN), 103-124 (GKDKKIPGKRSPRSKKGTAKKI), 296-353 (LLVS…SLSV), 375-397 (TQSSETAGSPSGPDSSEDACEDD), and 485-510 (QQPDLTDSDGKSPQAQADSDGSENVL). Residues 1–664 (MDDSDTPTYY…LDQDEVGGGS (664 aa)) lie on the Cytoplasmic side of the membrane. Residues 63–72 (VSEQDSLNNN) show a composition bias toward polar residues. The segment covering 109–121 (PGKRSPRSKKGTA) has biased composition (basic residues). The span at 300–314 (EDPKEGGATTKESES) shows a compositional bias: basic and acidic residues. Composition is skewed to polar residues over residues 343–353 (DVQTDSPSLSV) and 375–388 (TQSSETAGSPSGPD). The helical transmembrane segment at 665–685 (CILLVLLCIATVFLSVGGTAL) threads the bilayer. Residues 686-725 (YCTFGDMESPVCTDFADNMDFYYTKLLQGVAELKHWIYLS) lie on the Extracellular side of the membrane.

Belongs to the CNST family. Interacts with connexins GJA1/CX43, GJB1/CX32, GJB2/CX26, GJB3/CX31, GJB6/CX30 and GJC1/CX45. Also interacts with GGA1 and GGA2. Does not interact with PANX1.

It localises to the cell membrane. The protein localises to the golgi apparatus. It is found in the trans-Golgi network membrane. The protein resides in the cytoplasmic vesicle. Its subcellular location is the secretory vesicle. Required for targeting of connexins to the plasma membrane. This is Consortin (CNST) from Homo sapiens (Human).